A 196-amino-acid chain; its full sequence is Ribosome maturation factor RimP (196 aa).

This sequence belongs to the RimP family.

The protein localises to the cytoplasm. Functionally, required for maturation of 30S ribosomal subunits. This Lawsonia intracellularis (strain PHE/MN1-00) protein is Ribosome maturation factor RimP.